The primary structure comprises 181 residues: Acetylcholinesterase (181 aa).

Serine 76 serves as the catalytic Acyl-ester intermediate. The active-site Charge relay system is glutamate 132. Residues 162-181 (WQDQDNGGLPLTGNPTXPHN) form a disordered region.

The protein belongs to the type-B carboxylesterase/lipase family. The N-terminus is blocked. Expressed by the venom gland. Is also probably expressed by liver and muscle.

Its subcellular location is the synapse. The protein localises to the secreted. It is found in the cell membrane. The enzyme catalyses acetylcholine + H2O = choline + acetate + H(+). Its function is as follows. In venom, its toxic role is unclear: it could result in less musculatory control by rapidly hydrolyzing acetylcholine, or that it works synergistically with alkaline phosphatase (ALP) in paralyzing prey through hypotension. In muscle, it terminates signal transduction at the neuromuscular junction by rapid hydrolysis of the acetylcholine released into the synaptic cleft. In liver, its function is unclear: it could serve as a safeguard against any diffusion of acetylcholine from synapses into the circulation. In Naja oxiana (Central Asian cobra), this protein is Acetylcholinesterase (ACHE).